Consider the following 224-residue polypeptide: Ribonuclease HII (224 aa).

Residues 1-219 (MMIAGIDEAG…VENIREELKK (219 aa)) form the RNase H type-2 domain. 3 residues coordinate a divalent metal cation: aspartate 7, glutamate 8, and aspartate 105.

This sequence belongs to the RNase HII family. It depends on Mn(2+) as a cofactor. The cofactor is Mg(2+).

The protein resides in the cytoplasm. The catalysed reaction is Endonucleolytic cleavage to 5'-phosphomonoester.. Endonuclease that specifically degrades the RNA of RNA-DNA hybrids. The sequence is that of Ribonuclease HII from Methanosarcina barkeri (strain Fusaro / DSM 804).